Consider the following 497-residue polypeptide: Glycerol kinase (497 aa).

T11 contacts ADP. T11, S12, and S13 together coordinate ATP. Residue T11 coordinates sn-glycerol 3-phosphate. Residue R15 participates in ADP binding. Residues R81, E82, Y133, and D242 each coordinate sn-glycerol 3-phosphate. R81, E82, Y133, D242, and Q243 together coordinate glycerol. ADP contacts are provided by T264 and G307. ATP is bound by residues T264, G307, Q311, and G412. ADP-binding residues include G412 and N416.

It belongs to the FGGY kinase family.

It carries out the reaction glycerol + ATP = sn-glycerol 3-phosphate + ADP + H(+). The protein operates within polyol metabolism; glycerol degradation via glycerol kinase pathway; sn-glycerol 3-phosphate from glycerol: step 1/1. Inhibited by fructose 1,6-bisphosphate (FBP). Its function is as follows. Key enzyme in the regulation of glycerol uptake and metabolism. Catalyzes the phosphorylation of glycerol to yield sn-glycerol 3-phosphate. In Variovorax paradoxus (strain S110), this protein is Glycerol kinase.